The sequence spans 127 residues: Large ribosomal subunit protein bL17 (127 aa).

Belongs to the bacterial ribosomal protein bL17 family. Part of the 50S ribosomal subunit. Contacts protein L32.

The chain is Large ribosomal subunit protein bL17 from Stenotrophomonas maltophilia (strain R551-3).